The following is a 548-amino-acid chain: Probable delta-1-pyrroline-5-carboxylate dehydrogenase (548 aa).

E298 acts as the Proton acceptor in catalysis. Residue C332 is the Nucleophile of the active site. 3 positions are modified to phosphoserine: S391, S394, and S396.

It belongs to the aldehyde dehydrogenase family.

It carries out the reaction L-glutamate 5-semialdehyde + NAD(+) + H2O = L-glutamate + NADH + 2 H(+). Its pathway is amino-acid degradation; L-proline degradation into L-glutamate; L-glutamate from L-proline: step 2/2. This Schizosaccharomyces pombe (strain 972 / ATCC 24843) (Fission yeast) protein is Probable delta-1-pyrroline-5-carboxylate dehydrogenase.